We begin with the raw amino-acid sequence, 400 residues long: Argininosuccinate synthase (400 aa).

8–16 provides a ligand contact to ATP; the sequence is AYSGGLDTS. Tyr-87 lines the L-citrulline pocket. Position 117 (Gly-117) interacts with ATP. Positions 119, 123, and 124 each coordinate L-aspartate. Residue Asn-123 coordinates L-citrulline. Residues Arg-127, Ser-175, Glu-260, and Tyr-272 each contribute to the L-citrulline site.

The protein belongs to the argininosuccinate synthase family. Type 1 subfamily. Homotetramer.

Its subcellular location is the cytoplasm. It catalyses the reaction L-citrulline + L-aspartate + ATP = 2-(N(omega)-L-arginino)succinate + AMP + diphosphate + H(+). Its pathway is amino-acid biosynthesis; L-arginine biosynthesis; L-arginine from L-ornithine and carbamoyl phosphate: step 2/3. In Mycolicibacterium vanbaalenii (strain DSM 7251 / JCM 13017 / BCRC 16820 / KCTC 9966 / NRRL B-24157 / PYR-1) (Mycobacterium vanbaalenii), this protein is Argininosuccinate synthase.